A 478-amino-acid chain; its full sequence is GDP-fucose protein O-fucosyltransferase 3 (478 aa).

Residues 1–9 (MVRIQRGKL) lie on the Cytoplasmic side of the membrane. The chain crosses the membrane as a helical; Signal-anchor for type II membrane protein span at residues 10 to 30 (LAFCLCVMATVFLLITLQVVV). At 31–478 (ELGKFEGKKF…QEFWALVFKD (448 aa)) the chain is on the lumenal side. N-linked (GlcNAc...) asparagine glycans are attached at residues Asn110 and Asn168. A disulfide bridge links Cys389 with Cys392.

The protein belongs to the glycosyltransferase 10 family.

It is found in the endoplasmic reticulum membrane. The catalysed reaction is L-threonyl-[protein] + GDP-beta-L-fucose = 3-O-(alpha-L-fucosyl)-L-threonyl-[protein] + GDP + H(+). It catalyses the reaction L-seryl-[protein] + GDP-beta-L-fucose = 3-O-(alpha-L-fucosyl)-L-seryl-[protein] + GDP + H(+). The protein operates within protein modification; protein glycosylation. Functionally, protein O-fucosyltransferase that specifically catalyzes O-fucosylation of serine or threonine residues in EMI domains of target proteins, such as MMRN1, MMRN2 and EMID1. Attaches fucose through an O-glycosidic linkage. O-fucosylation of EMI domain-containing proteins may be required for facilitating protein folding and secretion. May also show alpha-(1,3)-fucosyltransferase activity toward the innermost N-acetyl glucosamine (GlcNAc) residue in biantennary N-glycan acceptors. However, this was tested with a library of synthetic substrates and this activity is unsure in vivo. May be involved in biosynthesis of Lewis X-carrying biantennary N-glycans that regulate neuron stem cell self-renewal during brain development. This chain is GDP-fucose protein O-fucosyltransferase 3 (FUT10), found in Bos taurus (Bovine).